A 1407-amino-acid polypeptide reads, in one-letter code: DNA-directed RNA polymerase subunit beta' (1407 aa).

Positions 70, 72, 85, and 88 each coordinate Zn(2+). Mg(2+)-binding residues include Asp-460, Asp-462, and Asp-464. The Zn(2+) site is built by Cys-814, Cys-888, Cys-895, and Cys-898. Position 972 is an N6-acetyllysine (Lys-972).

The protein belongs to the RNA polymerase beta' chain family. In terms of assembly, the RNAP catalytic core consists of 2 alpha, 1 beta, 1 beta' and 1 omega subunit. When a sigma factor is associated with the core the holoenzyme is formed, which can initiate transcription. Mg(2+) serves as cofactor. It depends on Zn(2+) as a cofactor.

It carries out the reaction RNA(n) + a ribonucleoside 5'-triphosphate = RNA(n+1) + diphosphate. In terms of biological role, DNA-dependent RNA polymerase catalyzes the transcription of DNA into RNA using the four ribonucleoside triphosphates as substrates. The polypeptide is DNA-directed RNA polymerase subunit beta' (Shigella boydii serotype 18 (strain CDC 3083-94 / BS512)).